Consider the following 320-residue polypeptide: Histidine decarboxylase proenzyme (320 aa).

The propeptide occupies 2–11 (NKNLEANRNR). Ser98 is modified (pyruvic acid (Ser)). Glu215 serves as the catalytic Proton donor.

As to quaternary structure, the proenzyme is a hexamer of identical pi chains; each pi chain monomer is cleaved to form a small (or beta) chain and a large (or alpha) chain by non-hydrolytic self-catalysis. Pyruvate serves as cofactor.

It carries out the reaction L-histidine + H(+) = histamine + CO2. This chain is Histidine decarboxylase proenzyme (hdc), found in Clostridium perfringens (strain ATCC 13124 / DSM 756 / JCM 1290 / NCIMB 6125 / NCTC 8237 / Type A).